Reading from the N-terminus, the 180-residue chain is Trafficking protein particle complex subunit 3 (180 aa).

Residue C68 is the site of S-palmitoyl cysteine attachment.

This sequence belongs to the TRAPP small subunits family. BET3 subfamily. In terms of assembly, homodimer. Part of the multisubunit TRAPP (transport protein particle) complex.

The protein resides in the golgi apparatus. The protein localises to the cis-Golgi network. Its subcellular location is the endoplasmic reticulum. Functionally, may play a role in vesicular transport from endoplasmic reticulum to Golgi. In Gallus gallus (Chicken), this protein is Trafficking protein particle complex subunit 3 (TRAPPC3).